A 1035-amino-acid chain; its full sequence is Cell-division control histidine kinase PdhS (1035 aa).

The interval 1-613 (MSGSYPFIDI…HADGSEEPVD (613 aa)) is important for polar localization. Positions 500–533 (QGLANTRAESETPVSETSSIEPVEPTPPVKTRSE) are disordered. An interaction with DivK region spans residues 614–1035 (THLNAIAWRG…VFPPTRVLAD (422 aa)). Residues 659 to 730 (HVEELKTILD…YLHGLSGNGV (72 aa)) form the PAS domain. Positions 802–1031 (RISHEIRTPL…VVEIVFPPTR (230 aa)) constitute a Histidine kinase domain. The residue at position 805 (histidine 805) is a Phosphohistidine; by autocatalysis.

Interacts with DivK.

It localises to the cytoplasm. The catalysed reaction is ATP + protein L-histidine = ADP + protein N-phospho-L-histidine.. Functionally, functions as a polar differentiation marker. Essential protein that, by localizing in the old pole of dividing cells, controls cell division and maturation, probably through control of DivK phosphorylation status and cellular distribution, which in turn regulates CtrA, a transcriptional regulator of the minB operon. The asymmetrical localization of this protein is probably required for cells to enter a new division cycle. The chain is Cell-division control histidine kinase PdhS (pdhS) from Brucella suis (strain ATCC 23445 / NCTC 10510).